The primary structure comprises 267 residues: MSNKVHLGHTARKRFGQNFLTDDSIISRIVGAISPDNDHVMVEIGPGLGAITEPVAMSIDKLSVVELDRDLVERLQNHPTLKDKLDIHQGDALQFDFSTLQQAGKKMKVFGNLPYNISTPLMFHLFEFAEIIETMHFMLQKEVVLRLSASPGCKAYGRLTVMAQYYCQVVPVLEVPPHSFTPAPKVDSAVVRLLPYANKPWPCKDVTVLRHLCTTAFNMRRKTLRNNLKQLISDEEFGLLNIDASLRPEQISVEQYVALANLLCDKQ.

Positions 18, 20, 45, 66, 91, and 112 each coordinate S-adenosyl-L-methionine.

This sequence belongs to the class I-like SAM-binding methyltransferase superfamily. rRNA adenine N(6)-methyltransferase family. RsmA subfamily.

The protein resides in the cytoplasm. It carries out the reaction adenosine(1518)/adenosine(1519) in 16S rRNA + 4 S-adenosyl-L-methionine = N(6)-dimethyladenosine(1518)/N(6)-dimethyladenosine(1519) in 16S rRNA + 4 S-adenosyl-L-homocysteine + 4 H(+). Its function is as follows. Specifically dimethylates two adjacent adenosines (A1518 and A1519) in the loop of a conserved hairpin near the 3'-end of 16S rRNA in the 30S particle. May play a critical role in biogenesis of 30S subunits. The chain is Ribosomal RNA small subunit methyltransferase A from Shewanella denitrificans (strain OS217 / ATCC BAA-1090 / DSM 15013).